A 314-amino-acid chain; its full sequence is Aspartate carbamoyltransferase catalytic subunit (314 aa).

Residues Arg-58 and Thr-59 each coordinate carbamoyl phosphate. Lys-86 contacts L-aspartate. Carbamoyl phosphate contacts are provided by Arg-108, His-136, and Gln-139. Positions 169 and 223 each coordinate L-aspartate. Carbamoyl phosphate contacts are provided by Gly-264 and Pro-265.

Belongs to the aspartate/ornithine carbamoyltransferase superfamily. ATCase family. In terms of assembly, heterododecamer (2C3:3R2) of six catalytic PyrB chains organized as two trimers (C3), and six regulatory PyrI chains organized as three dimers (R2).

It carries out the reaction carbamoyl phosphate + L-aspartate = N-carbamoyl-L-aspartate + phosphate + H(+). The protein operates within pyrimidine metabolism; UMP biosynthesis via de novo pathway; (S)-dihydroorotate from bicarbonate: step 2/3. Catalyzes the condensation of carbamoyl phosphate and aspartate to form carbamoyl aspartate and inorganic phosphate, the committed step in the de novo pyrimidine nucleotide biosynthesis pathway. In Opitutus terrae (strain DSM 11246 / JCM 15787 / PB90-1), this protein is Aspartate carbamoyltransferase catalytic subunit.